Here is a 299-residue protein sequence, read N- to C-terminus: MNPLETEIGGLRMKNPLMLASGIMGSKVHSLNLIARDAGAVVTKSVGVEEREGYRNPTVVNWKCGLINAVGLASPAAKDFAEELKDYTNEAPLLISLYGHSVEEFSDLVDTFDSALPYLHGYELNLSCPHVKGAGLDIGMDLELSAAIVEELKGKTKNPVFAKLSAMHDYLKLAKVLEDAGVDGITISNTLRGMKIDIMSGKPVLSNLSGGVSGPAIKPIALKCVYDLYKEIEVPIVGCGGITSFEDVLEFIMAGARAVQIGSAVYYSRRIFYSLKESLIAFTRARDCTISDLIGIAHS.

FMN is bound by residues Ser-21 and 44–45 (KS). Residues Lys-44, 68–72 (NAVGL), and Asn-125 contribute to the substrate site. Residue Asn-125 coordinates FMN. Cys-128 acts as the Nucleophile in catalysis. Residue Lys-163 coordinates FMN. Substrate is bound at residue 189 to 190 (NT). FMN-binding positions include Gly-214, 240 to 241 (GG), and 262 to 263 (GS).

Belongs to the dihydroorotate dehydrogenase family. Type 1 subfamily. Heterotetramer of 2 PyrK and 2 PyrD type B subunits. It depends on FMN as a cofactor.

It localises to the cytoplasm. The enzyme catalyses (S)-dihydroorotate + NAD(+) = orotate + NADH + H(+). It participates in pyrimidine metabolism; UMP biosynthesis via de novo pathway; orotate from (S)-dihydroorotate (NAD(+) route): step 1/1. In terms of biological role, catalyzes the conversion of dihydroorotate to orotate with NAD(+) as electron acceptor. In Archaeoglobus fulgidus (strain ATCC 49558 / DSM 4304 / JCM 9628 / NBRC 100126 / VC-16), this protein is Dihydroorotate dehydrogenase B (NAD(+)), catalytic subunit (pyrD).